Here is a 119-residue protein sequence, read N- to C-terminus: Large ribosomal subunit protein uL18 (119 aa).

Positions 1–23 (MSQVDKAARRQKIKDRSRVSVQG) are disordered.

Belongs to the universal ribosomal protein uL18 family. Part of the 50S ribosomal subunit; part of the 5S rRNA/L5/L18/L25 subcomplex. Contacts the 5S and 23S rRNAs.

This is one of the proteins that bind and probably mediate the attachment of the 5S RNA into the large ribosomal subunit, where it forms part of the central protuberance. This chain is Large ribosomal subunit protein uL18, found in Chlorobium chlorochromatii (strain CaD3).